Here is a 541-residue protein sequence, read N- to C-terminus: uncharacterized protein (541 aa).

The first 22 residues, 1–22, serve as a signal peptide directing secretion; that stretch reads MQFKYGALIFSGFLGLSIVLAS. Cysteine 23 carries the N-palmitoyl cysteine lipid modification. Residue cysteine 23 is the site of S-diacylglycerol cysteine attachment. Disordered regions lie at residues 446–468 and 480–514; these read APGQSSQKEGGQQQSNSKDNGNL and KTKTEVKKTEDTQNQGKKAEGTPNQGKKAEGTENQ. Residues 448-460 are compositionally biased toward low complexity; that stretch reads GQSSQKEGGQQQS. A compositionally biased stretch (basic and acidic residues) spans 480–490; the sequence is KTKTEVKKTED.

The protein belongs to the MG185/MG260 family.

It is found in the cell membrane. This is an uncharacterized protein from Mycoplasma pneumoniae (strain ATCC 29342 / M129 / Subtype 1) (Mycoplasmoides pneumoniae).